Consider the following 342-residue polypeptide: UDP-glucuronic acid decarboxylase 3 (342 aa).

Residues 1-11 (MAATSEKQNTT) show a composition bias toward polar residues. Positions 1-22 (MAATSEKQNTTKPPPSPSPLRN) are disordered. Residue 61-86 (DNYFTGSKENLKKWIGHPRFELIRHD) coordinates NAD(+). Arg170 contributes to the substrate binding site. Tyr173 (proton acceptor) is an active-site residue. 173-177 (YDEGK) contributes to the NAD(+) binding site. Substrate is bound at residue Asn202. An NAD(+)-binding site is contributed by Arg214. Substrate contacts are provided by residues 215-219 (VVSNF), 232-239 (QKPGTQTR), and 299-303 (DPRQR).

This sequence belongs to the NAD(P)-dependent epimerase/dehydratase family. UDP-glucuronic acid decarboxylase subfamily. Requires NAD(+) as cofactor. As to expression, ubiquitous.

The protein localises to the cytoplasm. The catalysed reaction is UDP-alpha-D-glucuronate + H(+) = UDP-alpha-D-xylose + CO2. The protein operates within nucleotide-sugar biosynthesis; UDP-alpha-D-xylose biosynthesis; UDP-alpha-D-xylose from UDP-alpha-D-glucuronate: step 1/1. Functionally, catalyzes the NAD-dependent decarboxylation of UDP-glucuronic acid to UDP-xylose. Necessary for the biosynthesis of the core tetrasaccharide in glycosaminoglycan biosynthesis. The chain is UDP-glucuronic acid decarboxylase 3 (UXS3) from Arabidopsis thaliana (Mouse-ear cress).